The following is a 129-amino-acid chain: Transcription factor bHLH138 (129 aa).

The segment covering 1–18 has biased composition (basic and acidic residues); it reads MERYTKKNERFKAEEGKG. The disordered stretch occupies residues 1-24; that stretch reads MERYTKKNERFKAEEGKGSKKSRT. Positions 19–68 constitute a bHLH domain; sequence SKKSRTFLTERERRALFNDRFFDLKNLIPNPTKGGEASIVQDGIVYINEL.

It belongs to the bHLH protein family.

It is found in the nucleus. This chain is Transcription factor bHLH138, found in Arabidopsis thaliana (Mouse-ear cress).